The following is a 28-amino-acid chain: Conotoxin as14b (28 aa).

2 cysteine pairs are disulfide-bonded: Cys-7–Cys-27 and Cys-11–Cys-23.

Belongs to the conotoxin L superfamily. In terms of tissue distribution, expressed by the venom duct.

The protein resides in the secreted. Functionally, in vivo, intracranial injection elicits scratching and grooming activity in mice, and causes body and rear limb extension and tail curling immediately upon injection. This Conus cancellatus (Cancellate cone) protein is Conotoxin as14b.